A 116-amino-acid chain; its full sequence is Large ribosomal subunit protein bL19 (116 aa).

The protein belongs to the bacterial ribosomal protein bL19 family.

In terms of biological role, this protein is located at the 30S-50S ribosomal subunit interface and may play a role in the structure and function of the aminoacyl-tRNA binding site. This chain is Large ribosomal subunit protein bL19, found in Pseudomonas aeruginosa (strain LESB58).